A 142-amino-acid polypeptide reads, in one-letter code: Hemoglobin subunit alpha-1 (142 aa).

Positions K2 to R142 constitute a Globin domain. Residue H59 participates in O2 binding. Position 88 (H88) interacts with heme b.

It belongs to the globin family. Major hemoglobin is a heterotetramer of two alpha-1 chains and two beta-1 chains. In terms of tissue distribution, red blood cells.

Functionally, involved in oxygen transport from the lung to the various peripheral tissues. This chain is Hemoglobin subunit alpha-1, found in Pleurodeles waltl (Iberian ribbed newt).